We begin with the raw amino-acid sequence, 132 residues long: MDVTRLLLATLLVFLCFFTVYSHLPPEEKLRDDRSLRSNSSVNLLDFPSVSIVALNKKSKHISRKEAEKKRSSKKEASMKKVARPRTPLSAPCVATRDSCKPPAPACCDPCASCQCRFFRSACSCRVLSLNC.

An N-terminal signal peptide occupies residues 1–22 (MDVTRLLLATLLVFLCFFTVYS). N-linked (GlcNAc...) asparagine glycosylation occurs at N39. The tract at residues 61–87 (HISRKEAEKKRSSKKEASMKKVARPRT) is disordered. A compositionally biased stretch (basic and acidic residues) spans 64–79 (RKEAEKKRSSKKEASM). Intrachain disulfides connect C93–C108, C100–C114, C107–C125, C111–C132, and C116–C123. Residues 93–132 (CVATRDSCKPPAPACCDPCASCQCRFFRSACSCRVLSLNC) form the Agouti domain.

It localises to the secreted. Its function is as follows. Involved in the regulation of melanogenesis. The binding of ASP to MC1R precludes alpha-MSH initiated signaling and thus blocks production of cAMP, leading to a down-regulation of eumelanogenesis (brown/black pigment) and thus increasing synthesis of pheomelanin (yellow/red pigment). This Colobus polykomos (Western black-and-white colobus monkey) protein is Agouti-signaling protein (ASIP).